The chain runs to 174 residues: MGCVVSKSDDIKNENESRQRNQASSSQQPSSSQTPSKQIGIAAKDSEEQPQEVSYSQMRELDNDFFKDIIDRTAQKFIDVSMVGPDGKDSFLDREKDYSAQIKDSKLLKPTSLTSLPRLSQQCQMSNLQNLLSQPTTFDNELMSKYTSSISENLNGIHIKECGELVVFFGNSLK.

The disordered stretch occupies residues methionine 1 to tyrosine 55. Residue glycine 2 is the site of N-myristoyl glycine attachment. A compositionally biased stretch (basic and acidic residues) spans lysine 7–glutamine 19. Residues arginine 20–glutamine 38 are compositionally biased toward low complexity.

This is an uncharacterized protein from Dictyostelium discoideum (Social amoeba).